The sequence spans 359 residues: Mitochondrial glutathione transporter SLC25A39 (359 aa).

The Mitochondrial intermembrane segment spans residues 1–14; the sequence is MADQDPGGISPLQQ. 3 Solcar repeats span residues 9 to 151, 159 to 243, and 253 to 347; these read ISPL…LKAF, SDLY…VKSW, and TSVG…GKNF. A helical membrane pass occupies residues 15-35; the sequence is MVASGAGAVVTSLFMTPLDVV. Residues 36 to 121 lie on the Mitochondrial matrix side of the membrane; the sequence is KVRLQSQRPS…VKIVRHEGTR (86 aa). The [2Fe-2S] cluster site is built by cysteine 74, cysteine 78, cysteine 88, and cysteine 94. Residues 122–142 traverse the membrane as a helical segment; it reads TLWSGLPATLVMTVPATAAYF. Residues 143 to 164 lie on the Mitochondrial intermembrane side of the membrane; that stretch reads TAYDQLKAFLCGRALTSDLYAP. The helical transmembrane segment at 165–185 threads the bilayer; sequence MVAGALARLGTVTVISPLELV. Residues 186-214 lie on the Mitochondrial matrix side of the membrane; it reads RTKLQAQHLSYRELGTCVRAAVAQGGWRS. Residues 215–235 traverse the membrane as a helical segment; sequence LWLGWGPTALRDVPFSALYWF. The Mitochondrial intermembrane segment spans residues 236-255; it reads NYELVKSWLSGLRPKDQTSV. A helical membrane pass occupies residues 256-276; it reads GISFVAGGISGMVAATLTLPF. Residues 277–317 lie on the Mitochondrial matrix side of the membrane; it reads DVVKTQRQVALGAVEALRVMPLNTDSTWLLLRRILAESGTR. The helical transmembrane segment at 318 to 338 threads the bilayer; that stretch reads GLFAGFLPRIIKAAPSCAIMI. The Mitochondrial intermembrane portion of the chain corresponds to 339 to 359; the sequence is STYEFGKNFFQRLNREQLLSP.

It belongs to the mitochondrial carrier (TC 2.A.29) family. Cleaved and degraded by AFG3L2; degradation by AFG3L2 is regulated by the ability of SLC25A39 to bind iron-sulfur. In absence of mitochondrial glutathione, SLC25A39 binds iron-sulfur, preventing cleavage and degradation by AFG3L2. The presence of mitochondrial glutathione prevents iron-sulfur-binding to SLC25A39, promoting cleavage and degradation by AFG3L2.

It is found in the mitochondrion inner membrane. It carries out the reaction glutathione(in) = glutathione(out). With respect to regulation, the activity of SLC25A39 is regulated by levels of mitochondrial glutathione via its ability to bind [2Fe-2S] iron-sulfur cluster. Upon physiological levels of mitochondrial glutathione, glutathione prevents iron-sulfur-binding to SLC25A39 promoting cleavage and degradation by AFG3L2. Upon depletion of mitochondrial glutathione, SLC25A39 binds iron-sulfur, preventing cleavage and degradation by AFG3L2. Mitochondrial transporter required for glutathione import into mitochondria. Glutathione, which plays key roles in oxidative metabolism, is produced exclusively in the cytosol and is imported in many organelles. Mitochondrial glutathione is required for the activity and stability of proteins containing iron-sulfur clusters, as well as erythropoiesis. The protein is Mitochondrial glutathione transporter SLC25A39 (SLC25A39) of Bos taurus (Bovine).